We begin with the raw amino-acid sequence, 1316 residues long: DNA-directed RNA polymerase subunit beta' (1316 aa).

Positions 60, 62, 75, and 78 each coordinate Zn(2+). The Mg(2+) site is built by D535, D537, and D539. Zn(2+)-binding residues include C891, C968, C975, and C978.

The protein belongs to the RNA polymerase beta' chain family. The RNAP catalytic core consists of 2 alpha, 1 beta, 1 beta' and 1 omega subunit. When a sigma factor is associated with the core the holoenzyme is formed, which can initiate transcription. Requires Mg(2+) as cofactor. Zn(2+) serves as cofactor.

It catalyses the reaction RNA(n) + a ribonucleoside 5'-triphosphate = RNA(n+1) + diphosphate. In terms of biological role, DNA-dependent RNA polymerase catalyzes the transcription of DNA into RNA using the four ribonucleoside triphosphates as substrates. In Mycobacterium leprae (strain Br4923), this protein is DNA-directed RNA polymerase subunit beta'.